The following is a 339-amino-acid chain: Ribosomal RNA small subunit methyltransferase C (339 aa).

Belongs to the methyltransferase superfamily. RsmC family. As to quaternary structure, monomer.

It localises to the cytoplasm. The enzyme catalyses guanosine(1207) in 16S rRNA + S-adenosyl-L-methionine = N(2)-methylguanosine(1207) in 16S rRNA + S-adenosyl-L-homocysteine + H(+). Functionally, specifically methylates the guanine in position 1207 of 16S rRNA in the 30S particle. The protein is Ribosomal RNA small subunit methyltransferase C of Photobacterium profundum (strain SS9).